The primary structure comprises 629 residues: Dehydrogenase pyvF (629 aa).

Residues 1-22 (MAGSPFTTALLSAWTLSTVAVG) form the signal peptide. FAD contacts are provided by residues 61–62 (AS) and 82–83 (EA). N-linked (GlcNAc...) asparagine glycosylation occurs at N92. Position 144-147 (144-147 (NLMA)) interacts with FAD. N-linked (GlcNAc...) asparagine glycosylation is found at N172, N182, N256, N284, N312, and N421. H552 acts as the Proton acceptor in catalysis. Residues A586 and 597-598 (PL) contribute to the FAD site.

It belongs to the GMC oxidoreductase family. As to quaternary structure, homodimer. The cofactor is FAD.

The protein operates within secondary metabolite biosynthesis. In terms of biological role, dehydrogenase; part of the gene cluster that mediates the biosynthesis of pyranoviolin A, a pyranonigrin analog with a C-3 methoxy group. Initially, the PKS portion of pyvA synthesizes C-10 carbon chain from 5 molecules of malonyl-CoA, which is then condensed with the thiolation (T) domain-bound glycine activated by the adenylation (A) domain. The subsequent chain release by Dieckmann condensation (DKC) could be catalyzed by the TE domain present at the C-terminus of pyvA and/or the alpha/beta hydrolase pyvD, installing the tetramic acid moiety. The FAD-dependent monooxygenase pyvC next epoxidizes one of the olefins of the polyketide part, and the epoxide ring-opening induces the dihydro-gamma-pyrone ring formation. The cytochrome P450 monooxygeanse pyvB would be responsible for the 2 consecutive reactions, in which the dihydro-gamma-pyrone is oxidized to gamma-pyrone and C-7 is hydroxylated to yield pyranonigrin F. Finally, the O-methyltransferase pyvH methylates the C-3 hydroxy group to complete the biosynthesis. In Aspergillus violaceofuscus (strain CBS 115571), this protein is Dehydrogenase pyvF.